A 417-amino-acid chain; its full sequence is Arginine biosynthesis bifunctional protein ArgJ (417 aa).

Substrate contacts are provided by threonine 162, lysine 188, threonine 199, glutamate 289, asparagine 412, and serine 417. Threonine 199 acts as the Nucleophile in catalysis.

This sequence belongs to the ArgJ family. In terms of assembly, heterotetramer of two alpha and two beta chains.

It localises to the cytoplasm. The enzyme catalyses N(2)-acetyl-L-ornithine + L-glutamate = N-acetyl-L-glutamate + L-ornithine. It carries out the reaction L-glutamate + acetyl-CoA = N-acetyl-L-glutamate + CoA + H(+). It participates in amino-acid biosynthesis; L-arginine biosynthesis; L-ornithine and N-acetyl-L-glutamate from L-glutamate and N(2)-acetyl-L-ornithine (cyclic): step 1/1. It functions in the pathway amino-acid biosynthesis; L-arginine biosynthesis; N(2)-acetyl-L-ornithine from L-glutamate: step 1/4. Functionally, catalyzes two activities which are involved in the cyclic version of arginine biosynthesis: the synthesis of N-acetylglutamate from glutamate and acetyl-CoA as the acetyl donor, and of ornithine by transacetylation between N(2)-acetylornithine and glutamate. This chain is Arginine biosynthesis bifunctional protein ArgJ, found in Nitrobacter winogradskyi (strain ATCC 25391 / DSM 10237 / CIP 104748 / NCIMB 11846 / Nb-255).